The chain runs to 302 residues: Glutaminase (302 aa).

Substrate is bound by residues serine 61, asparagine 111, glutamate 155, asparagine 162, tyrosine 186, tyrosine 238, and valine 256.

Belongs to the glutaminase family. In terms of assembly, homotetramer.

The enzyme catalyses L-glutamine + H2O = L-glutamate + NH4(+). This is Glutaminase from Pseudomonas putida (strain ATCC 700007 / DSM 6899 / JCM 31910 / BCRC 17059 / LMG 24140 / F1).